The chain runs to 141 residues: uncharacterized protein (141 aa).

Residues 10 to 117 (IFCDIVQGSI…VPKYETGKGF (108 aa)) enclose the HIT domain. The short motif at 102–106 (HFHLH) is the Histidine triad motif element.

This is an uncharacterized protein from Mycoplasma genitalium (strain ATCC 33530 / DSM 19775 / NCTC 10195 / G37) (Mycoplasmoides genitalium).